The primary structure comprises 337 residues: Lipoyl synthase (337 aa).

[4Fe-4S] cluster is bound by residues Cys-81, Cys-86, Cys-92, Cys-107, Cys-111, Cys-114, and Ser-323. In terms of domain architecture, Radical SAM core spans 93–312 (FSHGTATFMI…EDYGNALGFS (220 aa)).

Belongs to the radical SAM superfamily. Lipoyl synthase family. [4Fe-4S] cluster serves as cofactor.

Its subcellular location is the cytoplasm. The enzyme catalyses [[Fe-S] cluster scaffold protein carrying a second [4Fe-4S](2+) cluster] + N(6)-octanoyl-L-lysyl-[protein] + 2 oxidized [2Fe-2S]-[ferredoxin] + 2 S-adenosyl-L-methionine + 4 H(+) = [[Fe-S] cluster scaffold protein] + N(6)-[(R)-dihydrolipoyl]-L-lysyl-[protein] + 4 Fe(3+) + 2 hydrogen sulfide + 2 5'-deoxyadenosine + 2 L-methionine + 2 reduced [2Fe-2S]-[ferredoxin]. It functions in the pathway protein modification; protein lipoylation via endogenous pathway; protein N(6)-(lipoyl)lysine from octanoyl-[acyl-carrier-protein]: step 2/2. Its function is as follows. Catalyzes the radical-mediated insertion of two sulfur atoms into the C-6 and C-8 positions of the octanoyl moiety bound to the lipoyl domains of lipoate-dependent enzymes, thereby converting the octanoylated domains into lipoylated derivatives. The polypeptide is Lipoyl synthase (Xanthomonas axonopodis pv. citri (strain 306)).